Consider the following 189-residue polypeptide: Chitin synthase 1 (189 aa).

This sequence belongs to the chitin synthase family. Class I subfamily.

It localises to the cell membrane. The enzyme catalyses [(1-&gt;4)-N-acetyl-beta-D-glucosaminyl](n) + UDP-N-acetyl-alpha-D-glucosamine = [(1-&gt;4)-N-acetyl-beta-D-glucosaminyl](n+1) + UDP + H(+). In terms of biological role, polymerizes chitin, a structural polymer of the cell wall and septum, by transferring the sugar moiety of UDP-GlcNAc to the non-reducing end of the growing chitin polymer. The sequence is that of Chitin synthase 1 (CHS1) from Rhinocladiella atrovirens.